The chain runs to 198 residues: Nucleoid occlusion factor SlmA (198 aa).

In terms of domain architecture, HTH tetR-type spans 9 to 70 (RNRREEILQA…SLIEFIEDSL (62 aa)). Residues 33–52 (TTAKLAANVGVSEAALYRHF) constitute a DNA-binding region (H-T-H motif). Positions 117–144 (EQDRLQGRINQLFERIEAQLRQVLKERK) form a coiled coil.

Belongs to the nucleoid occlusion factor SlmA family. In terms of assembly, homodimer. Interacts with FtsZ.

It localises to the cytoplasm. The protein localises to the nucleoid. Required for nucleoid occlusion (NO) phenomenon, which prevents Z-ring formation and cell division over the nucleoid. Acts as a DNA-associated cell division inhibitor that binds simultaneously chromosomal DNA and FtsZ, and disrupts the assembly of FtsZ polymers. SlmA-DNA-binding sequences (SBS) are dispersed on non-Ter regions of the chromosome, preventing FtsZ polymerization at these regions. The protein is Nucleoid occlusion factor SlmA of Serratia proteamaculans (strain 568).